Consider the following 39-residue polypeptide: Pro-opiomelanocortin (39 aa).

S1 carries the N-acetylserine modification. The residue at position 13 (V13) is a Valine amide. S31 bears the Phosphoserine mark.

It belongs to the POMC family.

Its subcellular location is the secreted. Functionally, precursor protein for pituitary hormones that regulate stress and environmental adaptation. Its function is as follows. Stimulates the adrenal glands to release cortisol. Anorexigenic peptide. Increases the pigmentation of skin by increasing melanin production in melanocytes. This Balaenoptera borealis (Sei whale) protein is Pro-opiomelanocortin (POMC).